Reading from the N-terminus, the 557-residue chain is MPTLVAEKKRIQDLLGMDLGDRRFEKILFDFGLELDDVVEEEGKTMYRIEIPANRYDLLCAEGLCYALRAFLSMETYEDIDVEEGEVVVYKTGGEERPCIACAVIKGVDLLSEGAYKSFIDYQDKLHLTIGRNRALVSMGTHDLDKIKGPVFYKSETPERIGFKPLNAEREVNGKELGSRFPPGSKIGRYMRLIEKNEKYPLFEDSMGTIMSLPPIINSDATKISPGTKNVFVEMTGTDFHRVNTALKLLLGCFRGRKIESVEIRNGNERTRTPVMHNRSYVMGLGEINRSLGLDLSLSAAKSYMERMMHSVDTIDESTLRVRVHDIRSDVLHKCDLIEDIAIAHGFNNFRRELPSFFTAGSEIPLNKFSDKLRTELSIMGFDEALTLTLLSREENVIDGDQAVVLMNPKSASYEVCRTSLIPGLMKTVASNLHMKIPFRLFEVSDVVLLDKENECGASNSRRLAAMYCGHTPCLEEVQGSLSLLLKKCGVRHSYSTHNDSARYLKNQSALVIVEDAAIGSIGVCNPEICKTFRVPYAASFFEIDVEKLLSIYMART.

The B5 domain maps to 276 to 352 (MHNRSYVMGL…IAHGFNNFRR (77 aa)). Asp-330, Asp-336, Glu-339, and Asp-340 together coordinate Mg(2+).

This sequence belongs to the phenylalanyl-tRNA synthetase beta subunit family. Type 2 subfamily. As to quaternary structure, tetramer of two alpha and two beta subunits. Requires Mg(2+) as cofactor.

It is found in the cytoplasm. It carries out the reaction tRNA(Phe) + L-phenylalanine + ATP = L-phenylalanyl-tRNA(Phe) + AMP + diphosphate + H(+). This is Probable phenylalanine--tRNA ligase beta subunit from Encephalitozoon cuniculi (strain GB-M1) (Microsporidian parasite).